Reading from the N-terminus, the 119-residue chain is Ergochrome gene cluster protein CPUR_05426 (119 aa).

It participates in pigment biosynthesis. Part of the ergochrome gene cluster responsible for the typical purple-black color of the ergot sclerotia. The ergochrome gene cluster produces several ergot pigments including the yellow ergochrome secalonic acid and its derivatives, as well as the red anthraquinones endocrocin and clavorubin. The pathway begins with the synthesis of atrochrysone thioester by the polyketide synthase (PKS) CPUR_05437. The atrochrysone carboxyl ACP thioesterase CPUR_05436 then breaks the thioester bond and releases the atrochrysone carboxylic acid from CPUR_05437. The atrochrysone carboxylic acid is then converted to atrochrysone which is further transformed into emodin anthrone. The next step is performed by the anthrone oxygenase CPUR_05434 that catalyzes the oxidation of emodinanthrone to emodin. Emodin is further modified to yield monodictyphenone via several steps involving CPUR_05427, CPUR_05428, CPUR_05429 and CPUR_05430. The short chain dehydrogenase/reductase CPUR_05418 then catalyzes the C-5 ketoreduction to give the xanthone skeleton of the monomeric units. Ergochromes formation requires further dimerization steps of different xanthone units, probably catalyzed by the cytochrome P450 monooxygenase CPUR_05419. CPUR_05425, CPUR_05426 and CPUR_05431 are unique to Claviceps, thus it is likely that they are involved in further modification of xanthone units or in their dimerization. The yellow ergochromes and the red anthraquinone pigments endocrocin and clavorubin are products from the same PKS derived precursors and the latter are likely shunt products in the pathway of xanthone biosynthesis. It is proposed that atrochrysone carboxylic acid released from the PKS CPUR_05437 can also be converted to endocrocin anthrone which is further oxidized into endocrocin by CPUR_05435. Endocrocin could be then modified to clavorubin, possibly by CPUR_05423 and CPUR_05431. Clavorubin is the principal anthraquinone metabolite produced by the cluster with a much higher yield compared to endocrocin. This is Ergochrome gene cluster protein CPUR_05426 from Claviceps purpurea (strain 20.1) (Ergot fungus).